Reading from the N-terminus, the 102-residue chain is Large ribosomal subunit protein uL24 (102 aa).

It belongs to the universal ribosomal protein uL24 family. Part of the 50S ribosomal subunit.

In terms of biological role, one of two assembly initiator proteins, it binds directly to the 5'-end of the 23S rRNA, where it nucleates assembly of the 50S subunit. Its function is as follows. One of the proteins that surrounds the polypeptide exit tunnel on the outside of the subunit. This chain is Large ribosomal subunit protein uL24, found in Rhizobium rhizogenes (strain K84 / ATCC BAA-868) (Agrobacterium radiobacter).